The chain runs to 579 residues: XK-related protein 7 (579 aa).

Over residues 1 to 18 the composition is skewed to low complexity; that stretch reads MAAKSDGAAASASPDPEG. Residues 1 to 40 are disordered; sequence MAAKSDGAAASASPDPEGAAGGARGSAGGRGEAAAAAGPP. Over residues 19 to 31 the composition is skewed to gly residues; sequence AAGGARGSAGGRG. 2 consecutive transmembrane segments (helical) span residues 59–79 and 89–109; these read WVLCALLVFFSDGATDLWLAA and YFSLTLLFVLLPSLVVQLLSF. A disordered region spans residues 146–165; that stretch reads GAFRTKEGSPEPGPQPAPSS. The next 5 membrane-spanning stretches (helical) occupy residues 260 to 280, 314 to 334, 355 to 375, 384 to 404, and 415 to 435; these read LLPALSTSASLVSLAWTLASY, GLAFALFASVYKLYFGIFIVA, WEEIIYNMVVGIIYIFCWFNV, MTLYHCIVLLENAALTGFWYS, and LIMVCVVASSFALGIFFMCVY. The interval 466-510 is disordered; sequence ADAITSPPRSLPRTTGAERDGASAGERAGTPTPPVFQVRPGLPPT.

This sequence belongs to the XK family.

The protein resides in the cell membrane. The chain is XK-related protein 7 from Homo sapiens (Human).